We begin with the raw amino-acid sequence, 180 residues long: Large ribosomal subunit protein uL6 (180 aa).

The protein belongs to the universal ribosomal protein uL6 family. As to quaternary structure, part of the 50S ribosomal subunit.

In terms of biological role, this protein binds to the 23S rRNA, and is important in its secondary structure. It is located near the subunit interface in the base of the L7/L12 stalk, and near the tRNA binding site of the peptidyltransferase center. The polypeptide is Large ribosomal subunit protein uL6 (Clostridium botulinum (strain Langeland / NCTC 10281 / Type F)).